An 812-amino-acid chain; its full sequence is Lon protease (812 aa).

Residues 22-215 (YAVLPLRDIV…KALSFMEAEI (194 aa)) enclose the Lon N-terminal domain. ATP is bound at residue 367 to 374 (GPPGVGKT). The 182-residue stretch at 602-783 (EDQVGVVTGL…GEVLKHTLVR (182 aa)) folds into the Lon proteolytic domain. Residues Ser-689 and Lys-732 contribute to the active site. Residues 787 to 812 (PIEWTEQENPTAVPPVEDEAGASLAH) form a disordered region.

This sequence belongs to the peptidase S16 family. As to quaternary structure, homohexamer. Organized in a ring with a central cavity.

It localises to the cytoplasm. The enzyme catalyses Hydrolysis of proteins in presence of ATP.. Functionally, ATP-dependent serine protease that mediates the selective degradation of mutant and abnormal proteins as well as certain short-lived regulatory proteins. Required for cellular homeostasis and for survival from DNA damage and developmental changes induced by stress. Degrades polypeptides processively to yield small peptide fragments that are 5 to 10 amino acids long. Binds to DNA in a double-stranded, site-specific manner. In Brucella suis biovar 1 (strain 1330), this protein is Lon protease.